Consider the following 371-residue polypeptide: 4-hydroxy-3-methylbut-2-en-1-yl diphosphate synthase (flavodoxin) (371 aa).

[4Fe-4S] cluster is bound by residues cysteine 272, cysteine 275, cysteine 307, and glutamate 314.

This sequence belongs to the IspG family. [4Fe-4S] cluster serves as cofactor.

It catalyses the reaction (2E)-4-hydroxy-3-methylbut-2-enyl diphosphate + oxidized [flavodoxin] + H2O + 2 H(+) = 2-C-methyl-D-erythritol 2,4-cyclic diphosphate + reduced [flavodoxin]. It functions in the pathway isoprenoid biosynthesis; isopentenyl diphosphate biosynthesis via DXP pathway; isopentenyl diphosphate from 1-deoxy-D-xylulose 5-phosphate: step 5/6. Functionally, converts 2C-methyl-D-erythritol 2,4-cyclodiphosphate (ME-2,4cPP) into 1-hydroxy-2-methyl-2-(E)-butenyl 4-diphosphate. The sequence is that of 4-hydroxy-3-methylbut-2-en-1-yl diphosphate synthase (flavodoxin) from Magnetococcus marinus (strain ATCC BAA-1437 / JCM 17883 / MC-1).